The primary structure comprises 6199 residues: Adhesion G-protein coupled receptor V1 (6199 aa).

The first 23 residues, 1-23, serve as a signal peptide directing secretion; it reads MPAVLALSGLLLMLLTVSVRSES. Calx-beta domains follow at residues 24–109, 126–230, 249–355, 380–480, 637–737, 753–853, 869–972, 997–1083, 1099–1199, 1434–1534, 1563–1655, 1835–1937, 1963–2063, 2092–2190, 2208–2308, 2425–2525, 2582–2659, 2673–2773, 2814–2908, 2931–3029, and 3054–3154; these read AELR…VFIL, ATIT…VQLT, ISRN…QVVL, DKPY…LKLI, PDIA…ILTL, SREI…VVLS, NITV…ITLL, IYFA…YIVL, TVVI…LRLM, PIPG…FYLQ, GLFS…RVRL, IIVT…VRLT, LFVF…FLEL, QVII…RIEL, ITIL…KVEL, AAFC…FIIK, VREE…QIGL, DTVT…RVIL, PSSL…LVNI, EIII…QLIL, and GHGI…TVTL. Residues 24-5803 lie on the Extracellular side of the membrane; sequence AELRFQGQTQ…IESLASFNEA (5780 aa). EAR repeat units lie at residues 3239–3284, 3285–3333, 3336–3372, 3374–3420, 3422–3467, and 3471–3513; these read VLAV…KWQG, VFVP…RVQA, NLTL…VWNR, SFFL…QWTD, RFQN…LWGS, and VFQQ…SWRS. Calx-beta domains are found at residues 3562 to 3605, 3619 to 3719, 3778 to 3854, 3916 to 3985, 4000 to 4103, 4120 to 4220, 4247 to 4335, 4371 to 4471, 4493 to 4593, 4615 to 4715, 4993 to 5076, 5125 to 5225, and 5260 to 5360; these read SNQS…RVSL, QVTF…TIVL, ITLS…FVNI, VLRL…MVKL, VVVS…IQLL, VVIR…QLRL, HGLF…FLNI, VIIQ…LQLT, DSPN…IIML, KFGD…TLRL, QHLV…VNLT, SEDS…IYLS, and VGFS…LVEV. The region spanning 5636 to 5801 is the GAIN-B domain; the sequence is PYFTIAAHHW…AEIESLASFN (166 aa). Cystine bridges form between Cys5751-Cys5780 and Cys5768-Cys5782. A GPS region spans residues 5751-5801; it reads CLLWNQAAESWLSDGQFCRLVDDTQNYVECACSHLSIYTAYAEIESLASFN. A helical membrane pass occupies residues 5804-5824; the sequence is FYAAGFICISGFALAMVSHLM. Topologically, residues 5825–5834 are cytoplasmic; sequence CARFLMFAAK. Residues 5835 to 5855 form a helical membrane-spanning segment; that stretch reads LLTHMMVACLGTQICFLVSAF. Residues 5856–5864 are Extracellular-facing; the sequence is RGRMFSEDS. A helical transmembrane segment spans residues 5865–5885; it reads CAALGLFFHYFHLSQFGWMLV. The Cytoplasmic segment spans residues 5886-5908; that stretch reads QAINFWQILVMNDEHTERRYLLY. Residues 5909–5929 traverse the membrane as a helical segment; the sequence is FLLSWGLPALVIIVLVVVLLG. Residues 5930–5954 lie on the Extracellular side of the membrane; it reads GFGWSIHSVYGLVQGDLCFIPNVYA. The helical transmembrane segment at 5955 to 5975 threads the bilayer; the sequence is ALCTAALVPLICLVGVLVIFI. Topologically, residues 5976 to 6001 are cytoplasmic; the sequence is HAYQVTQQWKAYDDIYRGRTNSSEVP. A helical membrane pass occupies residues 6002–6022; it reads MMLYLFALVTLVCVWAGLHMA. The Extracellular portion of the chain corresponds to 6023-6025; the sequence is YRY. A helical membrane pass occupies residues 6026–6046; it reads IWMLILLVIFNIFLGLYVFSV. Residues 6047–6199 lie on the Cytoplasmic side of the membrane; it reads YFVMHNQLFW…RRIPIADTHL (153 aa).

This sequence belongs to the G-protein coupled receptor 2 family. Adhesion G-protein coupled receptor (ADGR) subfamily. As to quaternary structure, heterodimer of 2 chains generated by proteolytic processing; the large extracellular N-terminal fragment and the membrane-bound C-terminal fragment predominantly remain associated and non-covalently linked. In terms of processing, autoproteolytically processed at the GPS region of the GAIN-B domain; this cleavage modulates receptor activity.

Its subcellular location is the cell membrane. It is found in the cell projection. The protein localises to the stereocilium membrane. The protein resides in the photoreceptor inner segment. Its function is as follows. Receptor that may have an important role in the development of the sensory nervous system. The chain is Adhesion G-protein coupled receptor V1 (adgrv1) from Danio rerio (Zebrafish).